We begin with the raw amino-acid sequence, 398 residues long: DJ-1 protein homolog E (398 aa).

PfpI endopeptidase domains are found at residues 7–199 (KSAL…ESLG) and 210–393 (ASVL…TALG).

It belongs to the peptidase C56 family. In terms of assembly, homotrimer. In terms of tissue distribution, expressed in roots and cauline leaves.

May be involved in oxidative stress response. This Arabidopsis thaliana (Mouse-ear cress) protein is DJ-1 protein homolog E (DJ1E).